We begin with the raw amino-acid sequence, 890 residues long: DNA mismatch repair protein MutS (890 aa).

Residue 607 to 614 (GPNMSGKS) coordinates ATP.

It belongs to the DNA mismatch repair MutS family.

In terms of biological role, this protein is involved in the repair of mismatches in DNA. It is possible that it carries out the mismatch recognition step. This protein has a weak ATPase activity. The sequence is that of DNA mismatch repair protein MutS from Bacillus thuringiensis subsp. konkukian (strain 97-27).